The chain runs to 124 residues: Small ribosomal subunit protein uS13 (124 aa).

Positions 94-124 are disordered; it reads GLPLRGQRTKNNSRTRKGKRKTVANKKKATK. Basic residues predominate over residues 100 to 124; that stretch reads QRTKNNSRTRKGKRKTVANKKKATK.

The protein belongs to the universal ribosomal protein uS13 family. As to quaternary structure, part of the 30S ribosomal subunit. Forms a loose heterodimer with protein S19. Forms two bridges to the 50S subunit in the 70S ribosome.

Its function is as follows. Located at the top of the head of the 30S subunit, it contacts several helices of the 16S rRNA. In the 70S ribosome it contacts the 23S rRNA (bridge B1a) and protein L5 of the 50S subunit (bridge B1b), connecting the 2 subunits; these bridges are implicated in subunit movement. Contacts the tRNAs in the A and P-sites. This is Small ribosomal subunit protein uS13 from Flavobacterium psychrophilum (strain ATCC 49511 / DSM 21280 / CIP 103535 / JIP02/86).